The chain runs to 424 residues: UDP-N-acetylglucosamine 1-carboxyvinyltransferase (424 aa).

22 to 23 provides a ligand contact to phosphoenolpyruvate; that stretch reads KN. Residue arginine 93 coordinates UDP-N-acetyl-alpha-D-glucosamine. The active-site Proton donor is cysteine 117. Cysteine 117 carries the 2-(S-cysteinyl)pyruvic acid O-phosphothioketal modification. Residues 122–126, aspartate 307, and valine 329 each bind UDP-N-acetyl-alpha-D-glucosamine; that span reads RPIDL.

Belongs to the EPSP synthase family. MurA subfamily.

The protein localises to the cytoplasm. The enzyme catalyses phosphoenolpyruvate + UDP-N-acetyl-alpha-D-glucosamine = UDP-N-acetyl-3-O-(1-carboxyvinyl)-alpha-D-glucosamine + phosphate. It participates in cell wall biogenesis; peptidoglycan biosynthesis. In terms of biological role, cell wall formation. Adds enolpyruvyl to UDP-N-acetylglucosamine. The sequence is that of UDP-N-acetylglucosamine 1-carboxyvinyltransferase from Pelodictyon phaeoclathratiforme (strain DSM 5477 / BU-1).